The sequence spans 445 residues: Crotonyl-CoA reductase (445 aa).

Glutamate 149 lines the Zn(2+) pocket.

It belongs to the zinc-containing alcohol dehydrogenase family. Crotonyl-CoA carboxylase/reductase subfamily. In terms of assembly, homodimer. Zn(2+) is required as a cofactor.

The enzyme catalyses butanoyl-CoA + NADP(+) = (2E)-butenoyl-CoA + NADPH + H(+). Inhibited by NADPH at concentrations above 200 uM, by MgCl (30%), by ZnCl(2) (55%), and by CoCl, MnCl and CaCl (100%). Also inhibited by iodoacetamide, N-ethylmaleamide, the thiol group inhibitor beta-chloromercuribenzoate, palmitoyl-CoA and myristoyl-CoA. Functionally, catalyzes the conversion of crotonyl-CoA to butyryl-CoA. It uses only NADP as electron donor. May have a role in providing butyryl-CoA as a starter unit for straight-chain fatty acid biosynthesis. This Streptomyces avermitilis (strain ATCC 31267 / DSM 46492 / JCM 5070 / NBRC 14893 / NCIMB 12804 / NRRL 8165 / MA-4680) protein is Crotonyl-CoA reductase (ccrA2).